The primary structure comprises 240 residues: Probable phosphatase Athe_0620 (240 aa).

Zn(2+) is bound by residues histidine 8, histidine 10, histidine 16, histidine 41, glutamate 74, histidine 102, histidine 132, aspartate 192, and histidine 194.

The protein belongs to the PHP family. The cofactor is Zn(2+).

This is Probable phosphatase Athe_0620 from Caldicellulosiruptor bescii (strain ATCC BAA-1888 / DSM 6725 / KCTC 15123 / Z-1320) (Anaerocellum thermophilum).